The chain runs to 134 residues: Interleukin-5 (134 aa).

The N-terminal stretch at 1–19 (MRMLLHLSLLALGAAYVYA) is a signal peptide. Thr-22 carries O-linked (GalNAc...) threonine glycosylation. Asn-47 and Asn-90 each carry an N-linked (GlcNAc...) asparagine glycan.

This sequence belongs to the IL-5 family. As to quaternary structure, homodimer; disulfide-linked. Interacts with IL5RA. Interacts with CSF2RB.

The protein resides in the secreted. Its function is as follows. Homodimeric cytokine expressed predominantly by T-lymphocytes and NK cells that plays an important role in the survival, differentiation, and chemotaxis of eosinophils. Also acts on activated and resting B-cells to induce immunoglobulin production, growth, and differentiation. Mechanistically, exerts its biological effects through a receptor composed of IL5RA subunit and the cytokine receptor common subunit beta/CSF2RB. Binding to the receptor leads to activation of various kinases including LYN, SYK and JAK2 and thereby propagates signals through the RAS-MAPK and JAK-STAT5 pathways respectively. In Macaca mulatta (Rhesus macaque), this protein is Interleukin-5 (IL5).